A 693-amino-acid polypeptide reads, in one-letter code: MKIFREVFELGNKEIILETGGMARQADGSVTVSCGNNIVLVTTVVKKSVADGTDFFPLSVHYLEKTYAAGKIPGGFLRREGRPSEEQILISRLIDRSIRPSFPDGFFNEIQIVATVLSYDGAFSPDILALIGASASLAISGAPYDDVVAGVRVGYTNGKYILNPNKQDLRDSDLDLVVSGTDDAILMVESEANSLPESVMLGGILYAHKHLKTIINSINRLAKVASKPRMEYSIYQINKFLKSQIKSQFFGEIKNAYTIASKQERNLKLNAIRKNVLEYIFSSDVDGNEYTEKEILEAFHDIEKDLVRSNILEGKPRIDGRCTETIRPINVKIGVLPGVHGSALFTRGETQALVVTTLGSDRDAQLVESLDGIEKCRYMLHYNFPPYSVGECGMVGMAPKRREIGHANLAKRATQAVFPNEEAYPYVVRVVSEILESNGSSSMATVCGSSLSMMDAGVPIAEPVAGIAMGLIKDGAKYAVLSDILGDEDHLGDMDFKVAGTRYGVTALQMDIKIKGISREILEQALEQARVGRLHILGIMNEVIKEHKEAVSDVAPQIHVMNINPAKIKDVVGRGGATVKGIVEKTGAQIDTSDSGEVKVFAKDKKSMDMAVAMIEEIVAEVEEGQVYKGKIVKLLDSGVFVNLLGSQDGYLPFSEIEQAGMKTNSLVEGQGLEVLVQNIDRGGRVKLSLVAR.

2 residues coordinate Mg(2+): Asp-489 and Asp-495. Residues 556-615 (PQIHVMNINPAKIKDVVGRGGATVKGIVEKTGAQIDTSDSGEVKVFAKDKKSMDMAVAMI) enclose the KH domain. An S1 motif domain is found at 625–693 (GQVYKGKIVK…GRVKLSLVAR (69 aa)).

This sequence belongs to the polyribonucleotide nucleotidyltransferase family. As to quaternary structure, component of the RNA degradosome, which is a multiprotein complex involved in RNA processing and mRNA degradation. Mg(2+) is required as a cofactor.

Its subcellular location is the cytoplasm. The enzyme catalyses RNA(n+1) + phosphate = RNA(n) + a ribonucleoside 5'-diphosphate. In terms of biological role, involved in mRNA degradation. Catalyzes the phosphorolysis of single-stranded polyribonucleotides processively in the 3'- to 5'-direction. The protein is Polyribonucleotide nucleotidyltransferase of Francisella tularensis subsp. mediasiatica (strain FSC147).